The following is a 1302-amino-acid chain: MALKEKEFGHYAKRIDYTKVSGNLDLPNLIEIQTETYDWFKKTGISEVFREVFPIVGHEGNIVLEMLDWEFREPRRTISQAKDESKIFEAPIYSNLKLTINSKDVEVEKAIVKGEPELIKAWIEERVGHMITILKKTTDVIYYDIHSGDEIATCTVTIKERLDDKLIVDITIEKEGEVFFGDFPLMTGKGTFIVNGSEKVVVSQLVRSPGAYYKIDLNRKNGENVYYVDLIPSRGTWLEFESDHKKIKVGKEEKFENVFYVKIDKSRKVSVANFLTALGIIKEDALDIFGDNKLVKSTYELDPYTGDILYDQSIAVQEIYKKIRSGETATPDGATKYLYGLLFDKRKYDLTKAGRFKLIQKLSVENRIYNKILAEDIKDVNGKVVFTEGTLMDKEAINKLKGILKAGACLQEVKFSDEIICSNKIQKIKVYVDNEVRSRVANIIGIDPNATDEYVTVPDVLATFSYLLNLTDGIGEVDDIDHLGNRRVRTIGELLQNQFRIGLLRIEKNVKEKMSTSNLFKMKPSNIINNKPLSAIIGEFFNLSQLSQFMDQTNPLAELTNKRRLTALGPGGLSRERAGLEVRDVHYSHYGRICPIETPEGPNIGLINNLATYAKINSYGFIETPYRRVIGCKVTMENDYLTADEEKNYVVAQANIRLSDKGEILDEQVVARFQGENIIAGRNDVDYVDVSPKQIVSIATSCIPFLENDDANRALMGANMQRQAIPLIAPNSPYVGTGVEYAAARDSGLAIVSQYDGIVDFVDATRIVLKTKEGLKNYNLDTFVRSNQGTSLTHVPLVRQGQKVEKGQVLADGPSIDKGELALGQNVVVAFTTWNGYNYEDAIIVSERLVSEDVFTSIHIEEYTIERRQTKQGPEEITREIPNISENARKFLDDDGLVIIGTEVKPGDILVGKVTPKGQTQLSPEDKLLQAIFGEKSKNVKDNSLRVPNGGEGIIQAIKRFPREKYEVSADVLEVIKIYIVQKRKIQEGDKMAGRHGNKGVISKILPLEDMPHMEDGTPVDIMLNPLGVPSRMNIGQVLEIHLGMAAKKLGQKISTPVFDGMINEELIEIMDKAGMKNFGKEVLIDGRTGEKFDNPVSVGVMYMLKLSHMVDDKLHARNVGPYSLITQQPLGGKAQNGGQRFGEMEVWALEAYGAAHTLREILTIKSDDIKGRTRAYESIVKDKKIPEPGIPESFNVLTREIQGLGFNIHMIDEKGNIKNIKSYDEADYVDEDLLTDCDEFEDEFDIDNFILSTNREPQKKEHLEDFVKVEDSFDLVDNLDDNELDDIDNEIDEINDQDELS.

This sequence belongs to the RNA polymerase beta chain family. The RNAP catalytic core consists of 2 alpha, 1 beta, 1 beta' and 1 omega subunit. When a sigma factor is associated with the core the holoenzyme is formed, which can initiate transcription.

The enzyme catalyses RNA(n) + a ribonucleoside 5'-triphosphate = RNA(n+1) + diphosphate. Its function is as follows. DNA-dependent RNA polymerase catalyzes the transcription of DNA into RNA using the four ribonucleoside triphosphates as substrates. In Spiroplasma citri, this protein is DNA-directed RNA polymerase subunit beta.